Consider the following 540-residue polypeptide: Phenylalanine--tRNA ligase beta subunit (540 aa).

A B5 domain is found at 270–347 (MTPRTLNVPR…IGYGFDKIKS (78 aa)). Asp-325, Asp-331, Glu-334, and Asp-335 together coordinate Mg(2+).

The protein belongs to the phenylalanyl-tRNA synthetase beta subunit family. Type 2 subfamily. In terms of assembly, tetramer of two alpha and two beta subunits. Mg(2+) is required as a cofactor.

Its subcellular location is the cytoplasm. The enzyme catalyses tRNA(Phe) + L-phenylalanine + ATP = L-phenylalanyl-tRNA(Phe) + AMP + diphosphate + H(+). This chain is Phenylalanine--tRNA ligase beta subunit, found in Methanococcoides burtonii (strain DSM 6242 / NBRC 107633 / OCM 468 / ACE-M).